The primary structure comprises 194 residues: Molybdenum cofactor guanylyltransferase (194 aa).

Residues 12–14 (LAG), Lys-25, Asn-53, Asp-71, and Asp-101 contribute to the GTP site. Asp-101 is a binding site for Mg(2+).

This sequence belongs to the MobA family. In terms of assembly, monomer. Mg(2+) is required as a cofactor.

Its subcellular location is the cytoplasm. The catalysed reaction is Mo-molybdopterin + GTP + H(+) = Mo-molybdopterin guanine dinucleotide + diphosphate. Transfers a GMP moiety from GTP to Mo-molybdopterin (Mo-MPT) cofactor (Moco or molybdenum cofactor) to form Mo-molybdopterin guanine dinucleotide (Mo-MGD) cofactor. In Escherichia coli O157:H7, this protein is Molybdenum cofactor guanylyltransferase.